Reading from the N-terminus, the 348-residue chain is Protein RecA (348 aa).

67 to 74 (GPESSGKT) contributes to the ATP binding site.

The protein belongs to the RecA family.

It is found in the cytoplasm. Functionally, can catalyze the hydrolysis of ATP in the presence of single-stranded DNA, the ATP-dependent uptake of single-stranded DNA by duplex DNA, and the ATP-dependent hybridization of homologous single-stranded DNAs. It interacts with LexA causing its activation and leading to its autocatalytic cleavage. The protein is Protein RecA of Kineococcus radiotolerans (strain ATCC BAA-149 / DSM 14245 / SRS30216).